The primary structure comprises 323 residues: Thymidine kinase (323 aa).

11 to 18 (GPHGLGKT) contacts ATP. The active-site Proton acceptor is E36. Positions 54 and 78 each coordinate substrate. R169 is an ATP binding site. Position 175 (R175) interacts with substrate.

Belongs to the herpesviridae thymidine kinase family. As to quaternary structure, homodimer.

The enzyme catalyses thymidine + ATP = dTMP + ADP + H(+). In terms of biological role, catalyzes the transfer of the gamma-phospho group of ATP to thymidine to generate dTMP in the salvage pathway of pyrimidine synthesis. The dTMP serves as a substrate for DNA polymerase during viral DNA replication. Allows the virus to be reactivated and to grow in non-proliferative cells lacking a high concentration of phosphorylated nucleic acid precursors. This Bos taurus (Bovine) protein is Thymidine kinase.